The following is a 181-amino-acid chain: Acireductone dioxygenase (181 aa).

Fe(2+) contacts are provided by His-97, His-99, Glu-103, and His-141. Positions 97, 99, 103, and 141 each coordinate Ni(2+).

The protein belongs to the acireductone dioxygenase (ARD) family. In terms of assembly, monomer. Fe(2+) serves as cofactor. It depends on Ni(2+) as a cofactor.

It carries out the reaction 1,2-dihydroxy-5-(methylsulfanyl)pent-1-en-3-one + O2 = 3-(methylsulfanyl)propanoate + CO + formate + 2 H(+). It catalyses the reaction 1,2-dihydroxy-5-(methylsulfanyl)pent-1-en-3-one + O2 = 4-methylsulfanyl-2-oxobutanoate + formate + 2 H(+). It participates in amino-acid biosynthesis; L-methionine biosynthesis via salvage pathway; L-methionine from S-methyl-5-thio-alpha-D-ribose 1-phosphate: step 5/6. Catalyzes 2 different reactions between oxygen and the acireductone 1,2-dihydroxy-3-keto-5-methylthiopentene (DHK-MTPene) depending upon the metal bound in the active site. Fe-containing acireductone dioxygenase (Fe-ARD) produces formate and 2-keto-4-methylthiobutyrate (KMTB), the alpha-ketoacid precursor of methionine in the methionine recycle pathway. Ni-containing acireductone dioxygenase (Ni-ARD) produces methylthiopropionate, carbon monoxide and formate, and does not lie on the methionine recycle pathway. This is Acireductone dioxygenase from Stutzerimonas stutzeri (strain A1501) (Pseudomonas stutzeri).